Consider the following 732-residue polypeptide: DNA ligase (732 aa).

NAD(+) contacts are provided by residues 47–51 (DAEYD), 96–97 (SI), and E133. The active-site N6-AMP-lysine intermediate is the K135. Residues R156, E196, K317, and K341 each coordinate NAD(+). Zn(2+)-binding residues include C470, C473, C488, and C494. In terms of domain architecture, BRCT spans 653-732 (RATLPLAGKT…AGMLALLQGR (80 aa)).

Belongs to the NAD-dependent DNA ligase family. LigA subfamily. Mg(2+) serves as cofactor. The cofactor is Mn(2+).

The enzyme catalyses NAD(+) + (deoxyribonucleotide)n-3'-hydroxyl + 5'-phospho-(deoxyribonucleotide)m = (deoxyribonucleotide)n+m + AMP + beta-nicotinamide D-nucleotide.. Functionally, DNA ligase that catalyzes the formation of phosphodiester linkages between 5'-phosphoryl and 3'-hydroxyl groups in double-stranded DNA using NAD as a coenzyme and as the energy source for the reaction. It is essential for DNA replication and repair of damaged DNA. The chain is DNA ligase from Paracidovorax citrulli (strain AAC00-1) (Acidovorax citrulli).